We begin with the raw amino-acid sequence, 442 residues long: Chromosomal replication initiator protein DnaA (442 aa).

A domain I, interacts with DnaA modulators region spans residues 1–75 (MDAWPRCLER…GNGEVALAVG (75 aa)). The interval 75–104 (GSRPRAPEPLPAPQAVASAPAAAPIVPFAG) is domain II. The tract at residues 105–322 (NLDSHYTFAN…GALNTLVARA (218 aa)) is domain III, AAA+ region. 4 residues coordinate ATP: Gly-150, Gly-152, Lys-153, and Thr-154. A domain IV, binds dsDNA region spans residues 323-442 (NFTGRSITVE…WEKLIRKLSE (120 aa)).

The protein belongs to the DnaA family. As to quaternary structure, oligomerizes as a right-handed, spiral filament on DNA at oriC.

The protein resides in the cytoplasm. Functionally, plays an essential role in the initiation and regulation of chromosomal replication. ATP-DnaA binds to the origin of replication (oriC) to initiate formation of the DNA replication initiation complex once per cell cycle. Binds the DnaA box (a 9 base pair repeat at the origin) and separates the double-stranded (ds)DNA. Forms a right-handed helical filament on oriC DNA; dsDNA binds to the exterior of the filament while single-stranded (ss)DNA is stabiized in the filament's interior. The ATP-DnaA-oriC complex binds and stabilizes one strand of the AT-rich DNA unwinding element (DUE), permitting loading of DNA polymerase. After initiation quickly degrades to an ADP-DnaA complex that is not apt for DNA replication. Binds acidic phospholipids. In Xanthomonas campestris pv. campestris (strain B100), this protein is Chromosomal replication initiator protein DnaA.